The primary structure comprises 318 residues: MEQQNPIPIITSITVTNISSVAAPHCTHLCQKTRINKYIDRHPAIARANGTPRLSAKKSPSSNIVPNSPAATRFSVTRAAAIRTRNVTERVIIIAPVTNVFRFRIAWTRFRSLTSNGVMLIINQESVLYNIRDIFRACTIDEEWNYLIRGNIIYSPLLDWDISTENEQHSSVLLLATPAREKSFVRLLEKASDHNPEIRNRLGRLRAFTESCVSQPIFNIFTLFNAMIPLESCKKLVLFLRQLQILQRYFVIKKSTVGFESVSLEPDAAGVPLPPEFIDAAVAVQIPPHKTTPWFFGVVPIGMCRWKEGVSKREVVSF.

This is an uncharacterized protein from Ictaluridae (bullhead catfishes).